The primary structure comprises 339 residues: Erlin-2 (339 aa).

Over 1–3 the chain is Cytoplasmic; that stretch reads MAQ. A helical transmembrane segment spans residues 4 to 24; that stretch reads LGAVVAVASSFFCASLFSAVH. The Lumenal segment spans residues 25–339; sequence KIEEGHIGVY…EPLETATKEN (315 aa). Asn-106 carries an N-linked (GlcNAc...) asparagine glycan. Positions 177–309 are interaction with ERLIN1; sequence EAIRRNYELM…DIPNMFMDSA (133 aa). Position 267 is an N6-acetyllysine (Lys-267).

The protein belongs to the band 7/mec-2 family. In terms of assembly, forms a heteromeric complex with ERLIN1. In complex with ERLIN1, interacts with RNF170. Interacts with activated ITPR1, independently of the degree of ITPR1 polyubiquitination. Interacts with SCAP, INSIG1, SREBF1 and SREBF2 under cholesterol sufficiency conditions; indicative for an association with the SCAP-SREBP-INSIG complex. Probably part of an AMFR/gp78 and INSIG1-containing ubiquitin ligase complex involved in ERAD of HMGCR. Interacts with TMUB1; TMUB1 bridges the association with AMFR. Interacts with SYVN1 and RNF139. Interacts with TMEM259. Interacts with TMEM41B. Post-translationally, deubiquitinated by USP25; leading to stabilization. As to expression, ubiquitous.

It localises to the endoplasmic reticulum membrane. In terms of biological role, component of the ERLIN1/ERLIN2 complex which mediates the endoplasmic reticulum-associated degradation (ERAD) of inositol 1,4,5-trisphosphate receptors (IP3Rs) such as ITPR1. Promotes sterol-accelerated ERAD of HMGCR probably implicating an AMFR/gp78-containing ubiquitin ligase complex. Involved in regulation of cellular cholesterol homeostasis by regulation the SREBP signaling pathway. May promote ER retention of the SCAP-SREBF complex. The protein is Erlin-2 (ERLIN2) of Homo sapiens (Human).